Consider the following 313-residue polypeptide: Beta-ketoacyl-[acyl-carrier-protein] synthase III (313 aa).

Catalysis depends on residues C112 and H238. Residues 239–243 form an ACP-binding region; that stretch reads QANIR. N268 is an active-site residue.

It belongs to the thiolase-like superfamily. FabH family. In terms of assembly, homodimer.

Its subcellular location is the cytoplasm. It catalyses the reaction malonyl-[ACP] + acetyl-CoA + H(+) = 3-oxobutanoyl-[ACP] + CO2 + CoA. The protein operates within lipid metabolism; fatty acid biosynthesis. Its function is as follows. Catalyzes the condensation reaction of fatty acid synthesis by the addition to an acyl acceptor of two carbons from malonyl-ACP. Catalyzes the first condensation reaction which initiates fatty acid synthesis and may therefore play a role in governing the total rate of fatty acid production. Possesses both acetoacetyl-ACP synthase and acetyl transacylase activities. Its substrate specificity determines the biosynthesis of branched-chain and/or straight-chain of fatty acids. In Staphylococcus epidermidis (strain ATCC 35984 / DSM 28319 / BCRC 17069 / CCUG 31568 / BM 3577 / RP62A), this protein is Beta-ketoacyl-[acyl-carrier-protein] synthase III.